We begin with the raw amino-acid sequence, 270 residues long: 4-hydroxy-tetrahydrodipicolinate reductase (270 aa).

NAD(+) is bound by residues 11 to 16 (GAGGRM) and Glu-37. Arg-38 lines the NADP(+) pocket. Residues 101-103 (GTT) and 125-128 (APNM) each bind NAD(+). The Proton donor/acceptor role is filled by His-158. A (S)-2,3,4,5-tetrahydrodipicolinate-binding site is contributed by His-159. Lys-162 functions as the Proton donor in the catalytic mechanism. 168-169 (GT) provides a ligand contact to (S)-2,3,4,5-tetrahydrodipicolinate.

The protein belongs to the DapB family.

The protein resides in the cytoplasm. It catalyses the reaction (S)-2,3,4,5-tetrahydrodipicolinate + NAD(+) + H2O = (2S,4S)-4-hydroxy-2,3,4,5-tetrahydrodipicolinate + NADH + H(+). It carries out the reaction (S)-2,3,4,5-tetrahydrodipicolinate + NADP(+) + H2O = (2S,4S)-4-hydroxy-2,3,4,5-tetrahydrodipicolinate + NADPH + H(+). It functions in the pathway amino-acid biosynthesis; L-lysine biosynthesis via DAP pathway; (S)-tetrahydrodipicolinate from L-aspartate: step 4/4. Its function is as follows. Catalyzes the conversion of 4-hydroxy-tetrahydrodipicolinate (HTPA) to tetrahydrodipicolinate. The chain is 4-hydroxy-tetrahydrodipicolinate reductase from Shewanella putrefaciens (strain CN-32 / ATCC BAA-453).